Reading from the N-terminus, the 209-residue chain is Large ribosomal subunit protein uL4 (209 aa).

A disordered region spans residues 45–80; it reads RQGTHKAKERSELSGSTRKLIRQKGSGGARRGDINS.

The protein belongs to the universal ribosomal protein uL4 family. Part of the 50S ribosomal subunit.

Its function is as follows. One of the primary rRNA binding proteins, this protein initially binds near the 5'-end of the 23S rRNA. It is important during the early stages of 50S assembly. It makes multiple contacts with different domains of the 23S rRNA in the assembled 50S subunit and ribosome. Functionally, forms part of the polypeptide exit tunnel. This chain is Large ribosomal subunit protein uL4, found in Porphyromonas gingivalis (strain ATCC BAA-308 / W83).